The following is a 65-amino-acid chain: Large ribosomal subunit protein bL35 (65 aa).

The protein belongs to the bacterial ribosomal protein bL35 family.

This is Large ribosomal subunit protein bL35 from Aeromonas salmonicida (strain A449).